The primary structure comprises 248 residues: Anamorsin homolog (248 aa).

The segment at 4-129 (FKGLQKSLYI…ETGSSARLSF (126 aa)) is N-terminal SAM-like domain. The linker stretch occupies residues 130–161 (AKKNASAVNVWKISGDDEELIDEEELLDEEDK). Residues Cys-172, Cys-181, Cys-184, and Cys-186 each contribute to the [2Fe-2S] cluster site. Residues 172 to 186 (CSTTGKRKACKNCSC) form a fe-S binding site A region. The [4Fe-4S] cluster site is built by Cys-209, Cys-212, Cys-220, and Cys-223. 2 short sequence motifs (cx2C motif) span residues 209 to 212 (CGNC) and 220 to 223 (CSTC). Residues 209-223 (CGNCYLGDAFRCSTC) form a fe-S binding site B region.

Belongs to the anamorsin family. Monomer. [2Fe-2S] cluster is required as a cofactor. It depends on [4Fe-4S] cluster as a cofactor.

Its subcellular location is the cytoplasm. The protein localises to the mitochondrion intermembrane space. Its function is as follows. Component of the cytosolic iron-sulfur (Fe-S) protein assembly (CIA) machinery. Required for the maturation of extramitochondrial Fe-S proteins. Part of an electron transfer chain functioning in an early step of cytosolic Fe-S biogenesis, facilitating the de novo assembly of a [4Fe-4S] cluster on the cytosolic Fe-S scaffold complex. Electrons are transferred from NADPH via a FAD- and FMN-containing diflavin oxidoreductase. Together with the diflavin oxidoreductase, also required for the assembly of the diferric tyrosyl radical cofactor of ribonucleotide reductase (RNR), probably by providing electrons for reduction during radical cofactor maturation in the catalytic small subunit. The polypeptide is Anamorsin homolog (Drosophila yakuba (Fruit fly)).